The following is a 166-amino-acid chain: Interferon gamma (166 aa).

Positions 1–23 (MKYTSYFLALLLCGLLGFSGSYG) are cleaved as a signal peptide. Glutamine 24 bears the Pyrrolidone carboxylic acid mark. Asparagine 39 and asparagine 106 each carry an N-linked (GlcNAc...) asparagine glycan.

This sequence belongs to the type II (or gamma) interferon family. As to quaternary structure, homodimer. Interacts with IFNGR1 (via extracellular domain); this interaction promotes IFNGR1 dimerization. Released primarily from activated T lymphocytes.

Its subcellular location is the secreted. Functionally, type II interferon produced by immune cells such as T-cells and NK cells that plays crucial roles in antimicrobial, antiviral, and antitumor responses by activating effector immune cells and enhancing antigen presentation. Primarily signals through the JAK-STAT pathway after interaction with its receptor IFNGR1 to affect gene regulation. Upon IFNG binding, IFNGR1 intracellular domain opens out to allow association of downstream signaling components JAK2, JAK1 and STAT1, leading to STAT1 activation, nuclear translocation and transcription of IFNG-regulated genes. Many of the induced genes are transcription factors such as IRF1 that are able to further drive regulation of a next wave of transcription. Plays a role in class I antigen presentation pathway by inducing a replacement of catalytic proteasome subunits with immunoproteasome subunits. In turn, increases the quantity, quality, and repertoire of peptides for class I MHC loading. Increases the efficiency of peptide generation also by inducing the expression of activator PA28 that associates with the proteasome and alters its proteolytic cleavage preference. Up-regulates as well MHC II complexes on the cell surface by promoting expression of several key molecules such as cathepsins B/CTSB, H/CTSH, and L/CTSL. Participates in the regulation of hematopoietic stem cells during development and under homeostatic conditions by affecting their development, quiescence, and differentiation. In Bos taurus (Bovine), this protein is Interferon gamma (IFNG).